Consider the following 396-residue polypeptide: Argininosuccinate synthase (396 aa).

ATP is bound by residues 10-18 (AYSGGLDTS) and alanine 37. L-citrulline-binding residues include tyrosine 88 and serine 93. ATP is bound at residue glycine 118. L-aspartate contacts are provided by threonine 120, asparagine 124, and aspartate 125. Asparagine 124 lines the L-citrulline pocket. Residues arginine 128, serine 176, serine 185, glutamate 261, and tyrosine 273 each coordinate L-citrulline.

This sequence belongs to the argininosuccinate synthase family. Type 1 subfamily. As to quaternary structure, homotetramer.

It is found in the cytoplasm. The catalysed reaction is L-citrulline + L-aspartate + ATP = 2-(N(omega)-L-arginino)succinate + AMP + diphosphate + H(+). Its pathway is amino-acid biosynthesis; L-arginine biosynthesis; L-arginine from L-ornithine and carbamoyl phosphate: step 2/3. This Nitratidesulfovibrio vulgaris (strain ATCC 29579 / DSM 644 / CCUG 34227 / NCIMB 8303 / VKM B-1760 / Hildenborough) (Desulfovibrio vulgaris) protein is Argininosuccinate synthase.